A 117-amino-acid chain; its full sequence is Ribonuclease P protein component (117 aa).

Belongs to the RnpA family. As to quaternary structure, consists of a catalytic RNA component (M1 or rnpB) and a protein subunit.

It carries out the reaction Endonucleolytic cleavage of RNA, removing 5'-extranucleotides from tRNA precursor.. Its function is as follows. RNaseP catalyzes the removal of the 5'-leader sequence from pre-tRNA to produce the mature 5'-terminus. It can also cleave other RNA substrates such as 4.5S RNA. The protein component plays an auxiliary but essential role in vivo by binding to the 5'-leader sequence and broadening the substrate specificity of the ribozyme. The protein is Ribonuclease P protein component of Staphylococcus aureus (strain MW2).